Here is a 656-residue protein sequence, read N- to C-terminus: Bifunctional protein ThiO/ThiG (656 aa).

The thiO stretch occupies residues Met-1–Lys-395. Residues Val-7–Val-21 and Ala-48–Met-50 contribute to the FAD site. Residue Glu-56 coordinates glycine. An FAD-binding site is contributed by Val-169. Arg-298 and Arg-324 together coordinate glycine. His-322 to Leu-328 contributes to the FAD binding site. The tract at residues Asp-396 to Gly-656 is thiG. The active-site Schiff-base intermediate with DXP is Lys-498. Residues Gly-559, Ala-585 to Gly-586, and Asn-607 to Ser-608 contribute to the 1-deoxy-D-xylulose 5-phosphate site.

In the N-terminal section; belongs to the DAO family. ThiO subfamily. It in the C-terminal section; belongs to the ThiG family. In terms of assembly, interacts with ThiH and ThiS. The cofactor is FAD.

It localises to the cytoplasm. The catalysed reaction is glycine + O2 + H2O = glyoxylate + H2O2 + NH4(+). The enzyme catalyses [ThiS sulfur-carrier protein]-C-terminal-Gly-aminoethanethioate + 2-iminoacetate + 1-deoxy-D-xylulose 5-phosphate = [ThiS sulfur-carrier protein]-C-terminal Gly-Gly + 2-[(2R,5Z)-2-carboxy-4-methylthiazol-5(2H)-ylidene]ethyl phosphate + 2 H2O + H(+). Its pathway is cofactor biosynthesis; thiamine diphosphate biosynthesis. Catalyzes the FAD-dependent oxidative deamination of glycine. Is essential for thiamine biosynthesis since the oxidation of glycine catalyzed by ThiO generates the glycine imine intermediate (dehydroglycine) required for the biosynthesis of the thiazole ring of thiamine pyrophosphate. Functionally, catalyzes the rearrangement of 1-deoxy-D-xylulose 5-phosphate (DXP) to produce the thiazole phosphate moiety of thiamine. Sulfur is provided by the thiocarboxylate moiety of the carrier protein ThiS. In vitro, sulfur can be provided by H(2)S. The sequence is that of Bifunctional protein ThiO/ThiG (thiO/thiG) from Synechocystis sp. (strain ATCC 27184 / PCC 6803 / Kazusa).